The chain runs to 155 residues: RNA pyrophosphohydrolase (155 aa).

A Nudix hydrolase domain is found at 5–147; sequence KYRPNVAAII…KRQVYRQVIA (143 aa). Positions 42–63 match the Nudix box motif; sequence GGIDEGETPLEALHRELLEEIG.

Belongs to the Nudix hydrolase family. RppH subfamily. A divalent metal cation serves as cofactor.

In terms of biological role, accelerates the degradation of transcripts by removing pyrophosphate from the 5'-end of triphosphorylated RNA, leading to a more labile monophosphorylated state that can stimulate subsequent ribonuclease cleavage. The protein is RNA pyrophosphohydrolase of Helicobacter pylori (strain HPAG1).